The chain runs to 514 residues: Sugar transport protein 3 (514 aa).

Over 1–19 (MVAEEARKEAMAKSVSGGK) the chain is Cytoplasmic. The next 12 membrane-spanning stretches (helical) occupy residues 20 to 40 (ITYF…IFGY), 87 to 107 (LLTS…LLAS), 124 to 144 (VSFL…MLII), 147 to 167 (LLLG…LSEM), 174 to 194 (GAIS…ANVI), 207 to 227 (ISLA…LFLP), 289 to 309 (LVMA…VVAF), 327 to 347 (MSTL…MLVV), 356 to 376 (FLIG…IVMV), 392 to 412 (VVVL…PLGW), 430 to 450 (VTVA…PPML), and 456 to 476 (GIFF…QLFL). Topologically, residues 477 to 514 (PETKNVPIEKVVGLWEKHWFWRRMTSKRDIQETTILSH) are cytoplasmic.

It belongs to the major facilitator superfamily. Sugar transporter (TC 2.A.1.1) family.

The protein localises to the membrane. Functionally, mediates an active uptake of hexoses, probably by sugar/hydrogen symport. The sequence is that of Sugar transport protein 3 (STP3) from Arabidopsis thaliana (Mouse-ear cress).